A 279-amino-acid polypeptide reads, in one-letter code: 3-methyl-2-oxobutanoate hydroxymethyltransferase (279 aa).

Residues Asp-44 and Asp-83 each coordinate Mg(2+). 3-methyl-2-oxobutanoate-binding positions include 44–45 (DS), Asp-83, and Lys-112. Glu-114 serves as a coordination point for Mg(2+). The active-site Proton acceptor is the Glu-181.

The protein belongs to the PanB family. In terms of assembly, homodecamer; pentamer of dimers. Mg(2+) serves as cofactor.

It localises to the cytoplasm. It carries out the reaction 3-methyl-2-oxobutanoate + (6R)-5,10-methylene-5,6,7,8-tetrahydrofolate + H2O = 2-dehydropantoate + (6S)-5,6,7,8-tetrahydrofolate. Its pathway is cofactor biosynthesis; coenzyme A biosynthesis. Catalyzes the reversible reaction in which hydroxymethyl group from 5,10-methylenetetrahydrofolate is transferred onto alpha-ketoisovalerate to form ketopantoate. This is 3-methyl-2-oxobutanoate hydroxymethyltransferase from Nitrosopumilus maritimus (strain SCM1).